The chain runs to 410 residues: Cysteine desulfurase IscS (410 aa).

Residues 80–81 (AT), N160, Q188, and 208–210 (SGH) each bind pyridoxal 5'-phosphate. The residue at position 211 (K211) is an N6-(pyridoxal phosphate)lysine. Position 248 (T248) interacts with pyridoxal 5'-phosphate. Residue C334 is the Cysteine persulfide intermediate of the active site. C334 lines the [2Fe-2S] cluster pocket.

It belongs to the class-V pyridoxal-phosphate-dependent aminotransferase family. NifS/IscS subfamily. In terms of assembly, homodimer. Forms a heterotetramer with IscU, interacts with other sulfur acceptors. Requires pyridoxal 5'-phosphate as cofactor.

The protein resides in the cytoplasm. It catalyses the reaction (sulfur carrier)-H + L-cysteine = (sulfur carrier)-SH + L-alanine. It participates in cofactor biosynthesis; iron-sulfur cluster biosynthesis. Master enzyme that delivers sulfur to a number of partners involved in Fe-S cluster assembly, tRNA modification or cofactor biosynthesis. Catalyzes the removal of elemental sulfur atoms from cysteine to produce alanine. Functions as a sulfur delivery protein for Fe-S cluster synthesis onto IscU, an Fe-S scaffold assembly protein, as well as other S acceptor proteins. The polypeptide is Cysteine desulfurase IscS (Rickettsia africae (strain ESF-5)).